Reading from the N-terminus, the 387-residue chain is O-phospho-L-seryl-tRNA:Cys-tRNA synthase 2 (387 aa).

Residues 89 to 90 (AR), N196, and 219 to 221 (SGH) each bind pyridoxal 5'-phosphate. K222 carries the N6-(pyridoxal phosphate)lysine modification.

This sequence belongs to the SepCysS family. Homodimer. Interacts with SepRS. Pyridoxal 5'-phosphate is required as a cofactor.

It catalyses the reaction O-phospho-L-seryl-tRNA(Cys) + hydrogen sulfide + H(+) = L-cysteinyl-tRNA(Cys) + phosphate. Its function is as follows. Converts O-phospho-L-seryl-tRNA(Cys) (Sep-tRNA(Cys)) to L-cysteinyl-tRNA(Cys) (Cys-tRNA(Cys)). In Methanococcoides burtonii (strain DSM 6242 / NBRC 107633 / OCM 468 / ACE-M), this protein is O-phospho-L-seryl-tRNA:Cys-tRNA synthase 2.